We begin with the raw amino-acid sequence, 469 residues long: Glutamate--tRNA ligase 2 (469 aa).

A 'HIGH' region motif is present at residues 10–20; the sequence is PSPTGFLHIGS. The 'KMSKS' region motif lies at 239-243; it reads KLSKR. Lys-242 is an ATP binding site.

The protein belongs to the class-I aminoacyl-tRNA synthetase family. Glutamate--tRNA ligase type 1 subfamily. As to quaternary structure, monomer.

It is found in the cytoplasm. The catalysed reaction is tRNA(Glu) + L-glutamate + ATP = L-glutamyl-tRNA(Glu) + AMP + diphosphate. Catalyzes the attachment of glutamate to tRNA(Glu) in a two-step reaction: glutamate is first activated by ATP to form Glu-AMP and then transferred to the acceptor end of tRNA(Glu). The protein is Glutamate--tRNA ligase 2 of Rickettsia typhi (strain ATCC VR-144 / Wilmington).